Here is a 399-residue protein sequence, read N- to C-terminus: Chorismate synthase (399 aa).

NADP(+) contacts are provided by Arg-40 and Arg-46. Residues 134 to 136 (RAS), 255 to 256 (QA), Gly-299, 314 to 318 (KPIST), and Arg-340 contribute to the FMN site.

It belongs to the chorismate synthase family. As to quaternary structure, homotetramer. The cofactor is FMNH2.

The enzyme catalyses 5-O-(1-carboxyvinyl)-3-phosphoshikimate = chorismate + phosphate. It functions in the pathway metabolic intermediate biosynthesis; chorismate biosynthesis; chorismate from D-erythrose 4-phosphate and phosphoenolpyruvate: step 7/7. In terms of biological role, catalyzes the anti-1,4-elimination of the C-3 phosphate and the C-6 proR hydrogen from 5-enolpyruvylshikimate-3-phosphate (EPSP) to yield chorismate, which is the branch point compound that serves as the starting substrate for the three terminal pathways of aromatic amino acid biosynthesis. This reaction introduces a second double bond into the aromatic ring system. This Mycolicibacterium smegmatis (strain ATCC 700084 / mc(2)155) (Mycobacterium smegmatis) protein is Chorismate synthase.